An 854-amino-acid chain; its full sequence is MIPIPRMPLVLLLLLLILGSAKAQVNPAICRYPLGMSGGHIPDEDITASSQWSESTAAKYGRLDSEEGDGAWCPEIPVQPDDLKEFLQIDLRTLHFITLVGTQGRHAGGHGIEFAPMYKINYSRDGSRWISWRNRHGKQVLDGNSNPYDVFLKDLEPPIVARFVRLIPVTDHSMNVCMRVELYGCVWLDGLVSYNAPAGQQFVLPGGSIIYLNDSVYDGAVGYSMTEGLGQLTDGVSGLDDFTQTHEYHVWPGYDYVGWRNESATNGFIEIMFEFDRIRNFTTMKVHCNNMFAKGVKIFKEVQCYFRSEASEWEPTAVYFPLVLDDVNPSARFVTVPLHHRMASAIKCQYHFADTWMMFSEITFQSDAAMYNNSGALPTSPMAPTTYDPMLKVDDSNTRILIGCLVAIIFILLAIIVIILWRQFWQKMLEKASRRMLDDEMTVSLSLPSESSMFNNNRSSSPSEQESNSTYDRIFPLRPDYQEPSRLIRKLPEFAPGEEESGCSGVVKPAQPNGPEGVPHYAEADIVNLQGVTGGNTYCVPAVTMDLLSGKDVAVEEFPRKLLAFKEKLGEGQFGEVHLCEVEGMEKFKDKDFALDVSANQPVLVAVKMLRADANKNARNDFLKEIKIMSRLKDPNIIRLLAVCITEDPLCMITEYMENGDLNQFLSRHEPLSSCSSDATVSYANLKFMATQIASGMKYLSSLNFVHRDLATRNCLVGKNYTIKIADFGMSRNLYSGDYYRIQGRAVLPIRWMSWESILLGKFTTASDVWAFGVTLWETFTFCQEQPYSQLSDEQVIENTGEFFRDQGRQIYLPQPALCPDSVYKLMLSCWRRETKHRPSFQEIHLLLLQQGAE.

The first 21 residues, 1–21 (MIPIPRMPLVLLLLLLILGSA), serve as a signal peptide directing secretion. Over 22–399 (KAQVNPAICR…MLKVDDSNTR (378 aa)) the chain is Extracellular. In terms of domain architecture, F5/8 type C spans 30 to 185 (CRYPLGMSGG…VCMRVELYGC (156 aa)). Cystine bridges form between Cys-30–Cys-185 and Cys-73–Cys-177. Residues Asn-121, Asn-213, Asn-261, Asn-280, and Asn-372 are each glycosylated (N-linked (GlcNAc...) asparagine). The chain crosses the membrane as a helical span at residues 400–421 (ILIGCLVAIIFILLAIIVIILW). Residues 422–854 (RQFWQKMLEK…HLLLLQQGAE (433 aa)) are Cytoplasmic-facing. A disordered region spans residues 452-471 (SMFNNNRSSSPSEQESNSTY). Positions 455 to 469 (NNNRSSSPSEQESNS) are enriched in low complexity. A Phosphotyrosine; by SRC and autocatalysis modification is found at Tyr-471. Residues 563-848 (LAFKEKLGEG…PSFQEIHLLL (286 aa)) form the Protein kinase domain. ATP contacts are provided by residues 569 to 577 (LGEGQFGEV) and Lys-608. The active-site Proton acceptor is Asp-709. A phosphotyrosine; by SRC and autocatalysis mark is found at Tyr-735, Tyr-739, and Tyr-740.

This sequence belongs to the protein kinase superfamily. Tyr protein kinase family. Insulin receptor subfamily. Binds hydroxyproline-rich sequence motifs in fibrillar, glycosylated collagen, such as the GQOGVMGFO motif, where O stands for hydroxyproline. Interacts with SRC. Interacts (tyrosine phosphorylated) with SHC1. In terms of processing, N-glycosylated. Tyrosine phosphorylated in response to collagen binding. Phosphorylated by SRC; this is required for activation and subsequent autophosphorylation on additional tyrosine residues. Widely expressed. Detected in lung, ovary, skin and in testis Leydig cells (at protein level). Widely expressed. Detected at high levels in heart, lung, skeletal muscle, central nervous system (CNS) and kidney, and at lower levels in brain and testis. Detected in chondrocytes in tibia growth plates of young mice.

It is found in the cell membrane. It catalyses the reaction L-tyrosyl-[protein] + ATP = O-phospho-L-tyrosyl-[protein] + ADP + H(+). With respect to regulation, present in an inactive state in the absence of collagen binding and phosphorylation by SRC. Tyrosine phosphorylation enhances the affinity for ATP and the catalytic activity. In terms of biological role, tyrosine kinase that functions as a cell surface receptor for fibrillar collagen and regulates cell differentiation, remodeling of the extracellular matrix, cell migration and cell proliferation. Required for normal bone development. Regulates osteoblast differentiation and chondrocyte maturation via a signaling pathway that involves MAP kinases and leads to the activation of the transcription factor RUNX2. Regulates remodeling of the extracellular matrix by up-regulation of the collagenases MMP1, MMP2 and MMP13, and thereby facilitates cell migration and tumor cell invasion. Promotes fibroblast migration and proliferation, and thereby contributes to cutaneous wound healing. This chain is Discoidin domain-containing receptor 2 (Ddr2), found in Mus musculus (Mouse).